The sequence spans 248 residues: PF03932 family protein CutC (248 aa).

Belongs to the CutC family. As to quaternary structure, homodimer.

It localises to the cytoplasm. The sequence is that of PF03932 family protein CutC from Salmonella paratyphi A (strain AKU_12601).